Here is a 289-residue protein sequence, read N- to C-terminus: Phosphatidylserine decarboxylase proenzyme (289 aa).

Residues Asp-92, His-149, and Ser-254 each act as charge relay system; for autoendoproteolytic cleavage activity in the active site. Ser-254 (schiff-base intermediate with substrate; via pyruvic acid; for decarboxylase activity) is an active-site residue. The residue at position 254 (Ser-254) is a Pyruvic acid (Ser); by autocatalysis.

Belongs to the phosphatidylserine decarboxylase family. PSD-B subfamily. Prokaryotic type I sub-subfamily. Heterodimer of a large membrane-associated beta subunit and a small pyruvoyl-containing alpha subunit. The cofactor is pyruvate. In terms of processing, is synthesized initially as an inactive proenzyme. Formation of the active enzyme involves a self-maturation process in which the active site pyruvoyl group is generated from an internal serine residue via an autocatalytic post-translational modification. Two non-identical subunits are generated from the proenzyme in this reaction, and the pyruvate is formed at the N-terminus of the alpha chain, which is derived from the carboxyl end of the proenzyme. The autoendoproteolytic cleavage occurs by a canonical serine protease mechanism, in which the side chain hydroxyl group of the serine supplies its oxygen atom to form the C-terminus of the beta chain, while the remainder of the serine residue undergoes an oxidative deamination to produce ammonia and the pyruvoyl prosthetic group on the alpha chain. During this reaction, the Ser that is part of the protease active site of the proenzyme becomes the pyruvoyl prosthetic group, which constitutes an essential element of the active site of the mature decarboxylase.

Its subcellular location is the cell membrane. It catalyses the reaction a 1,2-diacyl-sn-glycero-3-phospho-L-serine + H(+) = a 1,2-diacyl-sn-glycero-3-phosphoethanolamine + CO2. It functions in the pathway phospholipid metabolism; phosphatidylethanolamine biosynthesis; phosphatidylethanolamine from CDP-diacylglycerol: step 2/2. Functionally, catalyzes the formation of phosphatidylethanolamine (PtdEtn) from phosphatidylserine (PtdSer). This Pseudomonas paraeruginosa (strain DSM 24068 / PA7) (Pseudomonas aeruginosa (strain PA7)) protein is Phosphatidylserine decarboxylase proenzyme.